We begin with the raw amino-acid sequence, 591 residues long: L-fucose isomerase (591 aa).

Catalysis depends on proton acceptor residues glutamate 337 and aspartate 361. Mn(2+) contacts are provided by glutamate 337, aspartate 361, and histidine 528.

It belongs to the L-fucose isomerase family. Homohexamer. Requires Mn(2+) as cofactor.

The protein resides in the cytoplasm. It carries out the reaction L-fucose = L-fuculose. Its pathway is carbohydrate degradation; L-fucose degradation; L-lactaldehyde and glycerone phosphate from L-fucose: step 1/3. Its function is as follows. Converts the aldose L-fucose into the corresponding ketose L-fuculose. This is L-fucose isomerase from Klebsiella pneumoniae subsp. pneumoniae (strain ATCC 700721 / MGH 78578).